The sequence spans 391 residues: MSTPTGQPIGLGLPDAPLPVLAPRRKTRQLMVGNVGVGSDYPVSVQSMTTTKTHDVNATLQQIAQLTASGCDIVRVACPKTVDAEALPAIAKKSPIPVIADIHFQPKYIFSAIDAGCAAVRVNPGNIKEFDGRVKEVAKAAGDAGIPIRIGVNAGSLDKRIMEKYGKATPEALVESALWEAGLFEDCGFGDIAISVKHNDPVIMVEAYRQLAAQSDYPLHLGVTEAGPAFQGTIKSSVAFGSLLSQGIGDTIRVSLSADPVEEIKVGDQILQSLNLRKRGLEIVSCPSCGRAQVDVYSLAEEVTAALDGMSIPLRVAVMGCVVNGPGEARDADLGVASGNGKGQIFVRGEVIKTVPESQIVETLIEEAVRLAEAEGLEIEEGAGPQVKITR.

The [4Fe-4S] cluster site is built by Cys-286, Cys-289, Cys-321, and Glu-328.

This sequence belongs to the IspG family. Requires [4Fe-4S] cluster as cofactor.

The catalysed reaction is (2E)-4-hydroxy-3-methylbut-2-enyl diphosphate + oxidized [flavodoxin] + H2O + 2 H(+) = 2-C-methyl-D-erythritol 2,4-cyclic diphosphate + reduced [flavodoxin]. It functions in the pathway isoprenoid biosynthesis; isopentenyl diphosphate biosynthesis via DXP pathway; isopentenyl diphosphate from 1-deoxy-D-xylulose 5-phosphate: step 5/6. Converts 2C-methyl-D-erythritol 2,4-cyclodiphosphate (ME-2,4cPP) into 1-hydroxy-2-methyl-2-(E)-butenyl 4-diphosphate. In Corynebacterium diphtheriae (strain ATCC 700971 / NCTC 13129 / Biotype gravis), this protein is 4-hydroxy-3-methylbut-2-en-1-yl diphosphate synthase (flavodoxin).